The chain runs to 422 residues: Testin (422 aa).

Residues 92–199 form the PET domain; the sequence is MILTNPVPAK…GDVKLPSEMD (108 aa). Disordered stretches follow at residues 135–162 and 194–226; these read QPVAGSEGAQYRKKQLAKQLPAHDQDPS and LPSEMDVKPGDRSSLDGGDRGTTAEVGAVEDKS. A compositionally biased stretch (basic and acidic residues) spans 194 to 212; it reads LPSEMDVKPGDRSSLDGGD. 3 LIM zinc-binding domains span residues 234–297, 299–359, and 362–422; these read YSCY…CDSE, PRCA…NHAV, and QGCH…MMMS.

It belongs to the prickle / espinas / testin family. As to quaternary structure, interacts via LIM domain 1 with ZYX. Interacts (via LIM domain 3) with ENAH and VASP. Interacts with ALKBH4, talin, actin, alpha-actinin, GRIP1 and PXN. Interacts (via LIM domain 2) with ACTL7A (via N-terminus). Heterodimer with ACTL7A; the heterodimer interacts with ENAH to form a heterotrimer.

The protein resides in the cytoplasm. The protein localises to the cell junction. Its subcellular location is the focal adhesion. Functionally, scaffold protein that may play a role in cell adhesion, cell spreading and in the reorganization of the actin cytoskeleton. Plays a role in the regulation of cell proliferation. May act as a tumor suppressor. The sequence is that of Testin (TES) from Monodelphis domestica (Gray short-tailed opossum).